The primary structure comprises 477 residues: Ankyrin repeat, SAM and basic leucine zipper domain-containing protein 1 (477 aa).

A phosphoserine mark is found at Ser-17, Ser-18, and Ser-20. ANK repeat units follow at residues 46–76, 80–109, 112–146, 150–179, 183–212, and 216–245; these read EKKE…SVDA, YGWT…NASF, DKQT…DPNV, RLMT…EVNT, NGYT…NKML, and DGKL…PLEG. The 63-residue stretch at 274–336 folds into the SAM domain; that stretch reads SYAAFGDLEV…KILTALKELE (63 aa).

Interacts with DDX4, PIWIL1, RANBP9 and TDRD1.

Its subcellular location is the cytoplasm. In terms of biological role, plays a central role during spermatogenesis by repressing transposable elements and preventing their mobilization, which is essential for the germline integrity. Acts via the piRNA metabolic process, which mediates the repression of transposable elements during meiosis by forming complexes composed of piRNAs and Piwi proteins and governs the methylation and subsequent repression of transposons. Its association with pi-bodies suggests a participation in the primary piRNAs metabolic process. Required prior to the pachytene stage to facilitate the production of multiple types of piRNAs, including those associated with repeats involved in the regulation of retrotransposons. May act by mediating protein-protein interactions during germ cell maturation. In Ateles geoffroyi (Black-handed spider monkey), this protein is Ankyrin repeat, SAM and basic leucine zipper domain-containing protein 1 (ASZ1).